The sequence spans 344 residues: tRNA N6-adenosine threonylcarbamoyltransferase (344 aa).

Residues H112 and H116 each coordinate Fe cation. Residues 135–139 (LVSGG), D168, G181, and N271 contribute to the substrate site. D299 contacts Fe cation.

It belongs to the KAE1 / TsaD family. Requires Fe(2+) as cofactor.

It is found in the cytoplasm. The enzyme catalyses L-threonylcarbamoyladenylate + adenosine(37) in tRNA = N(6)-L-threonylcarbamoyladenosine(37) in tRNA + AMP + H(+). In terms of biological role, required for the formation of a threonylcarbamoyl group on adenosine at position 37 (t(6)A37) in tRNAs that read codons beginning with adenine. Is involved in the transfer of the threonylcarbamoyl moiety of threonylcarbamoyl-AMP (TC-AMP) to the N6 group of A37, together with TsaE and TsaB. TsaD likely plays a direct catalytic role in this reaction. The chain is tRNA N6-adenosine threonylcarbamoyltransferase from Sphingopyxis alaskensis (strain DSM 13593 / LMG 18877 / RB2256) (Sphingomonas alaskensis).